The sequence spans 1639 residues: MKIIFFLCSFLFFIINTQCVTHESYQELVKKLEALEDAVLTGYSLFQKEKMVLNEGTSGTAVTTSTPGSKGSVASGGSGGSVASGGSVASGGSVASGGSVASGGSGNSRRTNPSDNSSDSDAKSYADLKHRVRNYLLTIKELKYPQLFDLTNHMLTLCDNIHGFKYLIDGYEEINELLYKLNFYFDLLRAKLNDVCANDYCQIPFNLKIRANELDVLKKLVFGYRKPLDNIKDNVGKMEDYIKKNKKTIENINELIEESKKTIDKNKNATKEEEKKKLYQAQYDLSIYNKQLEEAHNLISVLEKRIDTLKKNENIKELLDKINEIKNPPPANSGNTPNTLLDKNKKIEEHEKEIKEIAKTIKFNIDSLFTDPLELEYYLREKNKNIDISAKVETKESTEPNEYPNGVTYPLSYNDINNALNELNSFGDLINPFDYTKEPSKNIYTDNERKKFINEIKEKIKIEKKKIESDKKSYEDRSKSLNDITKEYEKLLNEIYDSKFNNNIDLTNFEKMMGKRYSYKVEKLTHHNTFASYENSKHNLEKLTKALKYMEDYSLRNIVVEKELKYYKNLISKIENEIETLVENIKKDEEQLFEKKITKDENKPDEKILEVSDIVKVQVQKVLLMNKIDELKKTQLILKNVELKHNIHVPNSYKQENKQEPYYLIVLKKEIDKLKVFMPKVESLINEEKKNIKTEGQSDNSEPSTEGEITGQATTKPGQQAGSALEGDSVQAQAQEQKQAQPPVPVPVPEAKAQVPTPPAPVNNKTENVSKLDYLEKLYEFLNTSYICHKYILVSHSTMNEKILKQYKITKEEESKLSSCDPLDLLFNIQNNIPVMYSMFDSLNNSLSQLFMEIYEKEMVCNLYKLKDNDKIKNLLEEAKKVSTSVKTLSSSSMQPLSLTPQDKPEVSANDDTSHSTNLNNSLKLFENILSLGKNKNIYQELIGQKSSENFYEKILKDSDTFYNESFTNFVKSKADDINSLNDESKRKKLEEDINKLKKTLQLSFDLYNKYKLKLERLFDKKKTVGKYKMQIKKLTLLKEQLESKLNSLNNPKHVLQNFSVFFNKKKEAEIAETENTLENTKILLKHYKGLVKYYNGESSPLKTLSEESIQTEDNYASLENFKVLSKLEGKLKDNLNLEKKKLSYLSSGLHHLIAELKEVIKNKNYTGNSPSENNTDVNNALESYKKFLPEGTDVATVVSESGSDTLEQSQPKKPASTHVGAESNTITTSQNVDDEVDDVIIVPIFGESEEDYDDLGQVVTGEAVTPSVIDNILSKIENEYEVLYLKPLAGVYRSLKKQLENNVMTFNVNVKDILNSRFNKRENFKNVLESDLIPYKDLTSSNYVVKDPYKFLNKEKRDKFLSSYNYIKDSIDTDINFANDVLGYYKILSEKYKSDLDSIKKYINDKQGENEKYLPFLNNIETLYKTVNDKIDLFVIHLEAKVLNYTYEKSNVEVKIKELNYLKTIQDKLADFKKNNNFVGIADLSTDYNHNNLLTKFLSTGMVFENLAKTVLSNLLDGNLQGMLNISQHQCVKKQCPQNSGCFRHLDEREECKCLLNYKQEGDKCVENPNPTCNENNGGCDADAKCTEEDSGSNGKKITCECTKPDSYPLFDGIFCSSSNFLGISFLLILMLILYSFI.

An N-terminal signal peptide occupies residues 1–19; it reads MKIIFFLCSFLFFIINTQC. 2 stretches are compositionally biased toward polar residues: residues 58-67 and 107-119; these read SGTAVTTSTP and NSRR…NSSD. Disordered stretches follow at residues 58–78 and 94–122; these read SGTA…SGGS and VASG…DSDA. Residues Asn-116 and Asn-268 are each glycosylated (N-linked (GlcNAc...) asparagine). The interval 689–764 is disordered; the sequence is KKNIKTEGQS…VPTPPAPVNN (76 aa). 2 stretches are compositionally biased toward polar residues: residues 694 to 704 and 711 to 722; these read TEGQSDNSEPS and GQATTKPGQQAG. A compositionally biased stretch (low complexity) spans 730-741; that stretch reads VQAQAQEQKQAQ. Residues Asn-764, Asn-768, Asn-783, and Asn-844 are each glycosylated (N-linked (GlcNAc...) asparagine). Positions 893–915 are disordered; the sequence is SMQPLSLTPQDKPEVSANDDTSH. N-linked (GlcNAc...) asparagine glycosylation is found at Asn-920, Asn-964, Asn-1058, Asn-1165, and Asn-1174. The segment at 1002–1116 is required for binding to host erythrocyte cell membrane; sequence QLSFDLYNKY…EESIQTEDNY (115 aa). A compositionally biased stretch (polar residues) spans 1199–1212; it reads VSESGSDTLEQSQP. The interval 1199–1229 is disordered; that stretch reads VSESGSDTLEQSQPKKPASTHVGAESNTITT. N-linked (GlcNAc...) asparagine glycans are attached at residues Asn-1445 and Asn-1526. EGF-like domains lie at 1530–1570 and 1571–1618; these read HQCV…VENP and NPTC…IFCS. Disulfide bonds link Cys-1532/Cys-1543, Cys-1537/Cys-1553, Cys-1555/Cys-1566, Cys-1574/Cys-1587, Cys-1581/Cys-1601, and Cys-1603/Cys-1617. Ser-1618 is lipidated: GPI-anchor amidated serine. Residues 1619–1639 constitute a propeptide, removed in mature form; it reads SSNFLGISFLLILMLILYSFI.

Forms a complex composed of subunits p83, p30, p38, and p42 which remain non-covalently associated; the complex is formed at the merozoite surface prior to egress from host erythrocytes. Forms a complex composed of processed MSP1 subunits, MSP6 subunit p36 and MSP7; the complex is formed at the merozoite surface prior to egress from host erythrocytes. Within the complex, interacts (via subunit p38) with MSP6 subunit p36 and (via subunits p83, p30 and p38) with MSP7 (via subunit p22). Forms a complex composed of MSP1, MSP6, DBLMSP1 and DBLMSP2. Within the complex, interacts (via subunit p38) with DBLMSP1 and DBLMSP2. Forms a complex composed of MSP1, and rhoptry proteins RhopH3, RAP1 and CLAG9/RhopH3. Within the complex, interacts (via subunits p42 and p19) with RhopH3 (via C-terminus). Forms a complex composed of MSP1, MSP6, MSP7, MSP9 and MSP3; within the complex, MSP6 and MSP9 mediate the binding to the host erythrocyte. Interacts (via subunits p19 and p42) with MSP9; the interaction is direct; MSP1 subunits p19 or p42, and MSP9 form a co-ligand complex that interacts with host SLC4A1/Band 3 protein. May interact with PFD6. Interacts with host spectrin. As to quaternary structure, interacts with host glycophorin GYPA in a sialic acid-independent manner. In terms of assembly, interacts with host proinflammatory cytokine S100P; the interaction blocks S100P inflammatory and chemotactic activities. Interacts with host SLC4A1/Band 3 (via 5ABC region) on the host erythrocyte surface in a sialic acid-independent manner. In terms of processing, the p190 precursor is cleaved by SUB1 prior to merozoite egress into 4 subunits p83, p30, p38, and p42 which remain non-covalently associated. SUB1-mediated proteolytic cleavage occurs in an orderly manner; the first cleavage occurs at the p83/p30 site, followed by cleavage at the p30/p38 site, the last cleavage occurs at the p38/p42 site. The order of cleavage is essential for parasite viability. SUB1-mediated processing is essential for merozoite egress. In a second processing step during erythrocyte invasion, p42 is cleaved by SUB2 into p33 and p19; the latter remains attached to the merozoite surface via its GPI-anchor and stays on the surface during the subsequent ring stage.

It is found in the cell membrane. It localises to the secreted. The protein localises to the vacuole membrane. In terms of biological role, during the asexual blood stage, involved in merozoite egress from host erythrocytes possibly via its interaction with the host cytoskeleton protein spectrin resulting in the destabilization of the host cytoskeleton and thus leading to erythrocyte cell membrane rupture. Involved in the binding to host erythrocytes and is required for host erythrocyte invasion. By binding to host proinflammatory cytokine S100P may interfere with host immune responses. Functionally, involved in merozoite invasion of host erythrocytes. May play a role in the biogenesis and/or function of the food vacuole during the intraerythrocytic development. The chain is Merozoite surface protein 1 from Plasmodium falciparum (isolate Wellcome).